The following is a 369-amino-acid chain: Peptide chain release factor 1 (369 aa).

Residue Q234 is modified to N5-methylglutamine.

This sequence belongs to the prokaryotic/mitochondrial release factor family. Post-translationally, methylated by PrmC. Methylation increases the termination efficiency of RF1.

It localises to the cytoplasm. Its function is as follows. Peptide chain release factor 1 directs the termination of translation in response to the peptide chain termination codons UAG and UAA. This is Peptide chain release factor 1 from Kocuria rhizophila (strain ATCC 9341 / DSM 348 / NBRC 103217 / DC2201).